The chain runs to 122 residues: Secreted RxLR effector protein RXLR-C251 (122 aa).

The N-terminal stretch at M1–A24 is a signal peptide. Residues R48–R51 carry the RxLR motif.

It belongs to the RxLR effector family.

The protein resides in the secreted. Its subcellular location is the host cytoplasm. It localises to the host nucleus. In terms of biological role, secreted effector that does not suppress pattern-triggered immunity (PTI) in plant host. The sequence is that of Secreted RxLR effector protein RXLR-C251 from Plasmopara halstedii (Downy mildew of sunflower).